The primary structure comprises 149 residues: MNKGQRHIKIREIIMNSDIETQDELVDRLKEAGFNVTQATVSRDIKEMQLVKVPMANGRYKYSLPSDQRFNPLQKLKRALVDVFIKLDGTGNLLVLRTLPGNAHAIGVLLDNLDWGEIVGTICGDDTCLIICRTPKDAKKVSNQLLSML.

This sequence belongs to the ArgR family.

It localises to the cytoplasm. It participates in amino-acid biosynthesis; L-arginine biosynthesis [regulation]. Regulates arginine biosynthesis genes. The protein is Arginine repressor of Geobacillus thermodenitrificans (strain NG80-2).